Consider the following 733-residue polypeptide: Catalase-peroxidase (733 aa).

Positions 96–219 (WHSAGTYRTG…LAAVQMGLIY (124 aa)) form a cross-link, tryptophyl-tyrosyl-methioninium (Trp-Tyr) (with M-245). The Proton acceptor role is filled by His-97. Positions 219 to 245 (YVNPEGPNGNPDPLAAAKDIRETFARM) form a cross-link, tryptophyl-tyrosyl-methioninium (Tyr-Met) (with W-96). Position 260 (His-260) interacts with heme b.

This sequence belongs to the peroxidase family. Peroxidase/catalase subfamily. In terms of assembly, homodimer or homotetramer. The cofactor is heme b. Formation of the three residue Trp-Tyr-Met cross-link is important for the catalase, but not the peroxidase activity of the enzyme.

It carries out the reaction H2O2 + AH2 = A + 2 H2O. The enzyme catalyses 2 H2O2 = O2 + 2 H2O. Functionally, bifunctional enzyme with both catalase and broad-spectrum peroxidase activity. The sequence is that of Catalase-peroxidase from Geobacter sp. (strain M21).